The sequence spans 515 residues: Lysine--tRNA ligase (515 aa).

Mg(2+) contacts are provided by E425 and E432.

The protein belongs to the class-II aminoacyl-tRNA synthetase family. As to quaternary structure, homodimer. Requires Mg(2+) as cofactor.

The protein localises to the cytoplasm. It catalyses the reaction tRNA(Lys) + L-lysine + ATP = L-lysyl-tRNA(Lys) + AMP + diphosphate. This is Lysine--tRNA ligase from Cupriavidus metallidurans (strain ATCC 43123 / DSM 2839 / NBRC 102507 / CH34) (Ralstonia metallidurans).